We begin with the raw amino-acid sequence, 461 residues long: Photosystem II CP43 reaction center protein (461 aa).

A propeptide spanning residues 1 to 2 is cleaved from the precursor; the sequence is ME. Threonine 3 carries the post-translational modification N-acetylthreonine. Threonine 3 carries the post-translational modification Phosphothreonine. The next 5 helical transmembrane spans lie at 57–81, 122–143, 166–188, 243–263, and 279–300; these read LFEV…PHLA, LIGP…KDKN, KAMY…RIIT, TPWP…LSYS, and WFNN…ASQS. Glutamate 355 is a [CaMn4O5] cluster binding site. Residues 435–459 form a helical membrane-spanning segment; the sequence is RARAAAAGFEKGIDRLDEPVLSMRP.

Belongs to the PsbB/PsbC family. PsbC subfamily. In terms of assembly, PSII is composed of 1 copy each of membrane proteins PsbA, PsbB, PsbC, PsbD, PsbE, PsbF, PsbH, PsbI, PsbJ, PsbK, PsbL, PsbM, PsbT, PsbX, PsbY, PsbZ, Psb30/Ycf12, at least 3 peripheral proteins of the oxygen-evolving complex and a large number of cofactors. It forms dimeric complexes. It depends on Binds multiple chlorophylls and provides some of the ligands for the Ca-4Mn-5O cluster of the oxygen-evolving complex. It may also provide a ligand for a Cl- that is required for oxygen evolution. PSII binds additional chlorophylls, carotenoids and specific lipids. as a cofactor.

The protein localises to the plastid. It is found in the chloroplast thylakoid membrane. In terms of biological role, one of the components of the core complex of photosystem II (PSII). It binds chlorophyll and helps catalyze the primary light-induced photochemical processes of PSII. PSII is a light-driven water:plastoquinone oxidoreductase, using light energy to abstract electrons from H(2)O, generating O(2) and a proton gradient subsequently used for ATP formation. The protein is Photosystem II CP43 reaction center protein of Tetradesmus obliquus (Green alga).